Here is a 1133-residue protein sequence, read N- to C-terminus: Error-prone DNA polymerase (1133 aa).

This sequence belongs to the DNA polymerase type-C family. DnaE2 subfamily.

It localises to the cytoplasm. The enzyme catalyses DNA(n) + a 2'-deoxyribonucleoside 5'-triphosphate = DNA(n+1) + diphosphate. In terms of biological role, DNA polymerase involved in damage-induced mutagenesis and translesion synthesis (TLS). It is not the major replicative DNA polymerase. This is Error-prone DNA polymerase from Anaeromyxobacter sp. (strain K).